The following is a 426-amino-acid chain: GTPase HflX (426 aa).

The Hflx-type G domain maps to 198 to 365; it reads PTVSLVGYTN…ALTERLSGEV (168 aa). GTP is bound by residues 204-211, 229-233, 251-254, 317-320, and 343-345; these read GYTNAGKS, FATLD, DTVG, NKID, and SAQ. Residues serine 211 and threonine 231 each coordinate Mg(2+).

The protein belongs to the TRAFAC class OBG-HflX-like GTPase superfamily. HflX GTPase family. As to quaternary structure, monomer. Associates with the 50S ribosomal subunit. This interaction occurs in the presence of GTP, GDP, ATP or ADP, but not in their absence. Mg(2+) serves as cofactor.

It localises to the cytoplasm. Its activity is regulated as follows. Intrinsic GTPase activity is very slow and can be stimulated by the presence of 50S ribosomal subunits or 70S ribosomes. GTPase activity is inhibited by ATP. Its function is as follows. GTPase that associates with the 50S ribosomal subunit and may have a role during protein synthesis or ribosome biogenesis. In vitro, also exhibits ATPase activity. In Escherichia coli (strain K12), this protein is GTPase HflX.